The sequence spans 707 residues: Kinesin-like protein KIN-13B (707 aa).

Residues 152–477 (KIKVVVRKRP…LRYADRVKSL (326 aa)) enclose the Kinesin motor domain. 243-250 (GQTGSGKT) contributes to the ATP binding site. The stretch at 619–656 (EHLNELLQEEEDLVSAHRKQVEETLDMIKEEMNLLVEA) forms a coiled coil.

The protein belongs to the TRAFAC class myosin-kinesin ATPase superfamily. Kinesin family. KIN-13 subfamily.

The chain is Kinesin-like protein KIN-13B from Oryza sativa subsp. japonica (Rice).